A 213-amino-acid polypeptide reads, in one-letter code: StAR-related lipid transfer protein 5 (213 aa).

The START domain occupies 1–213 (MDPALAAQMS…LQKAVKQFHE (213 aa)).

May be involved in the intracellular transport of sterols or other lipids. May bind cholesterol or other sterols. In Homo sapiens (Human), this protein is StAR-related lipid transfer protein 5 (STARD5).